We begin with the raw amino-acid sequence, 489 residues long: UDP-N-acetylmuramoyl-L-alanyl-D-glutamate--2,6-diaminopimelate ligase (489 aa).

S32 lines the UDP-N-acetyl-alpha-D-muramoyl-L-alanyl-D-glutamate pocket. 113–119 (GTNGKTT) is a binding site for ATP. UDP-N-acetyl-alpha-D-muramoyl-L-alanyl-D-glutamate contacts are provided by residues 154–155 (TT), S181, Q187, and R189. At K221 the chain carries N6-carboxylysine. Meso-2,6-diaminopimelate contacts are provided by residues R381, 405 to 408 (DNPR), G456, and E460. Positions 405–408 (DNPR) match the Meso-diaminopimelate recognition motif motif.

This sequence belongs to the MurCDEF family. MurE subfamily. It depends on Mg(2+) as a cofactor. Post-translationally, carboxylation is probably crucial for Mg(2+) binding and, consequently, for the gamma-phosphate positioning of ATP.

It localises to the cytoplasm. It catalyses the reaction UDP-N-acetyl-alpha-D-muramoyl-L-alanyl-D-glutamate + meso-2,6-diaminopimelate + ATP = UDP-N-acetyl-alpha-D-muramoyl-L-alanyl-gamma-D-glutamyl-meso-2,6-diaminopimelate + ADP + phosphate + H(+). Its pathway is cell wall biogenesis; peptidoglycan biosynthesis. Its function is as follows. Catalyzes the addition of meso-diaminopimelic acid to the nucleotide precursor UDP-N-acetylmuramoyl-L-alanyl-D-glutamate (UMAG) in the biosynthesis of bacterial cell-wall peptidoglycan. This Gloeobacter violaceus (strain ATCC 29082 / PCC 7421) protein is UDP-N-acetylmuramoyl-L-alanyl-D-glutamate--2,6-diaminopimelate ligase.